Reading from the N-terminus, the 137-residue chain is Diacylglycerol kinase (137 aa).

Glutamate 42 provides a ligand contact to a divalent metal cation. 2 consecutive transmembrane segments (helical) span residues 49 to 67 (LIAF…ATFF) and 73 to 89 (AILF…NTAI). Residue glutamate 83 is the Proton acceptor of the active site. Glutamate 90 is a binding site for a divalent metal cation. The chain crosses the membrane as a helical span at residues 112 to 132 (SFACLCLIVANGVYAAYVVIF).

Belongs to the bacterial diacylglycerol kinase family. Mg(2+) is required as a cofactor.

Its subcellular location is the cell inner membrane. It catalyses the reaction a 1,2-diacyl-sn-glycerol + ATP = a 1,2-diacyl-sn-glycero-3-phosphate + ADP + H(+). Catalyzes the ATP-dependent phosphorylation of sn-l,2-diacylglycerol (DAG) to phosphatidic acid. Involved in the recycling of diacylglycerol produced as a by-product during membrane-derived oligosaccharide (MDO) biosynthesis. The sequence is that of Diacylglycerol kinase (dgkA) from Sinorhizobium sp.